Consider the following 329-residue polypeptide: Beta-ketoacyl-[acyl-carrier-protein] synthase III (329 aa).

Catalysis depends on residues Cys-123 and His-256. Residues 257–261 form an ACP-binding region; sequence QANIR. Residue Asn-286 is part of the active site.

This sequence belongs to the thiolase-like superfamily. FabH family. Homodimer.

It is found in the cytoplasm. It catalyses the reaction malonyl-[ACP] + acetyl-CoA + H(+) = 3-oxobutanoyl-[ACP] + CO2 + CoA. The protein operates within lipid metabolism; fatty acid biosynthesis. Its function is as follows. Catalyzes the condensation reaction of fatty acid synthesis by the addition to an acyl acceptor of two carbons from malonyl-ACP. Catalyzes the first condensation reaction which initiates fatty acid synthesis and may therefore play a role in governing the total rate of fatty acid production. Possesses both acetoacetyl-ACP synthase and acetyl transacylase activities. Its substrate specificity determines the biosynthesis of branched-chain and/or straight-chain of fatty acids. The sequence is that of Beta-ketoacyl-[acyl-carrier-protein] synthase III from Burkholderia cenocepacia (strain HI2424).